The sequence spans 495 residues: ATP synthase subunit beta, chloroplastic (495 aa).

An ATP-binding site is contributed by 172 to 179; the sequence is GGAGVGKT.

This sequence belongs to the ATPase alpha/beta chains family. In terms of assembly, F-type ATPases have 2 components, CF(1) - the catalytic core - and CF(0) - the membrane proton channel. CF(1) has five subunits: alpha(3), beta(3), gamma(1), delta(1), epsilon(1). CF(0) has four main subunits: a(1), b(1), b'(1) and c(9-12).

It localises to the plastid. The protein localises to the chloroplast thylakoid membrane. The catalysed reaction is ATP + H2O + 4 H(+)(in) = ADP + phosphate + 5 H(+)(out). In terms of biological role, produces ATP from ADP in the presence of a proton gradient across the membrane. The catalytic sites are hosted primarily by the beta subunits. The protein is ATP synthase subunit beta, chloroplastic of Scilla messeniaca (Greek squill).